The chain runs to 245 residues: Ribonuclease PH (245 aa).

Residues Arg93 and 131–133 (GTR) contribute to the phosphate site.

The protein belongs to the RNase PH family. As to quaternary structure, homohexameric ring arranged as a trimer of dimers.

The catalysed reaction is tRNA(n+1) + phosphate = tRNA(n) + a ribonucleoside 5'-diphosphate. Its function is as follows. Phosphorolytic 3'-5' exoribonuclease that plays an important role in tRNA 3'-end maturation. Removes nucleotide residues following the 3'-CCA terminus of tRNAs; can also add nucleotides to the ends of RNA molecules by using nucleoside diphosphates as substrates, but this may not be physiologically important. Probably plays a role in initiation of 16S rRNA degradation (leading to ribosome degradation) during starvation. This Corynebacterium glutamicum (strain ATCC 13032 / DSM 20300 / JCM 1318 / BCRC 11384 / CCUG 27702 / LMG 3730 / NBRC 12168 / NCIMB 10025 / NRRL B-2784 / 534) protein is Ribonuclease PH.